The following is a 158-amino-acid chain: Pathogenesis-related protein 2 (158 aa).

Belongs to the BetVI family.

This Petroselinum crispum (Parsley) protein is Pathogenesis-related protein 2 (PR2).